The primary structure comprises 199 residues: Putative acetyltransferase SACOL2570 (199 aa).

This sequence belongs to the transferase hexapeptide repeat family.

The chain is Putative acetyltransferase SACOL2570 from Staphylococcus aureus (strain COL).